We begin with the raw amino-acid sequence, 212 residues long: 3-isopropylmalate dehydratase small subunit (212 aa).

It belongs to the LeuD family. LeuD type 1 subfamily. Heterodimer of LeuC and LeuD.

The enzyme catalyses (2R,3S)-3-isopropylmalate = (2S)-2-isopropylmalate. It participates in amino-acid biosynthesis; L-leucine biosynthesis; L-leucine from 3-methyl-2-oxobutanoate: step 2/4. In terms of biological role, catalyzes the isomerization between 2-isopropylmalate and 3-isopropylmalate, via the formation of 2-isopropylmaleate. This chain is 3-isopropylmalate dehydratase small subunit, found in Pseudomonas aeruginosa (strain LESB58).